The primary structure comprises 169 residues: ATP synthase subunit b (169 aa).

A helical transmembrane segment spans residues 11-31 (IPSFIAQVVNFGLLLGLLYLF).

The protein belongs to the ATPase B chain family. F-type ATPases have 2 components, F(1) - the catalytic core - and F(0) - the membrane proton channel. F(1) has five subunits: alpha(3), beta(3), gamma(1), delta(1), epsilon(1). F(0) has three main subunits: a(1), b(2) and c(10-14). The alpha and beta chains form an alternating ring which encloses part of the gamma chain. F(1) is attached to F(0) by a central stalk formed by the gamma and epsilon chains, while a peripheral stalk is formed by the delta and b chains.

Its subcellular location is the cell membrane. Functionally, f(1)F(0) ATP synthase produces ATP from ADP in the presence of a proton or sodium gradient. F-type ATPases consist of two structural domains, F(1) containing the extramembraneous catalytic core and F(0) containing the membrane proton channel, linked together by a central stalk and a peripheral stalk. During catalysis, ATP synthesis in the catalytic domain of F(1) is coupled via a rotary mechanism of the central stalk subunits to proton translocation. Its function is as follows. Component of the F(0) channel, it forms part of the peripheral stalk, linking F(1) to F(0). In Dehalococcoides mccartyi (strain ATCC BAA-2266 / KCTC 15142 / 195) (Dehalococcoides ethenogenes (strain 195)), this protein is ATP synthase subunit b.